The primary structure comprises 2271 residues: Serine-rich adhesin for platelets (2271 aa).

An N-terminal signal peptide occupies residues 1-89 (MSKRQKAFHD…VNMLHDQQAF (89 aa)). The segment at 90–230 (AASDAPLTSE…KTSTTSTSTA (141 aa)) is serine-rich repeat region 1, SRR1. The span at 100–111 (LNTQSETVGNQN) shows a compositional bias: polar residues. Disordered stretches follow at residues 100–229 (LNTQ…STST), 751–791 (NSMS…VVST), and 806–2243 (SVSA…GLLG). The span at 112-128 (STTIEASTSTADSTSVT) shows a compositional bias: low complexity. The span at 129–140 (KNSSSVQTSNSD) shows a compositional bias: polar residues. Residues 150 to 229 (VTSTTNSTSN…NKTSTTSTST (80 aa)) show a composition bias toward low complexity. The tract at residues 231 to 751 (PVKLRTFSRL…TTFKYEVTRN (521 aa)) is non-repeat region (NRR). Composition is skewed to low complexity over residues 752–791 (SMSDSVSTSGSTQQSQSVSTSKADSQSASTSTSGSIVVST), 806–1392 (SVSA…LSLS), and 1402–2214 (SNSA…ATSE). Positions 752-2232 (SMSDSVSTSG…AQSEKRLPDT (1481 aa)) are serine-rich repeat region 2, SRR2. The short motif at 2229–2233 (LPDTG) is the LPXTG sorting signal element. T2232 carries the pentaglycyl murein peptidoglycan amidated threonine modification. A propeptide spans 2233–2271 (GDSIKQNGLLGGVMTLLVGLGLMKRKKKKDENDQDDSQA) (removed by sortase).

Belongs to the serine-rich repeat protein (SRRP) family. Post-translationally, proteolytically cleaved by a metalloprotease. In terms of processing, glycosylated. It is probable that most of the Ser residues in SSR1 and SSR2 are O-GlcNAcylated. Sequential glycosylation by sugar transferases are able to generate complex sugar polymorphisms.

It is found in the secreted. It localises to the cell wall. Mediates binding to human platelets, possibly through a receptor-ligand interaction. Probably associated with virulence in endovascular infection. The sequence is that of Serine-rich adhesin for platelets (sraP) from Staphylococcus aureus (strain Mu50 / ATCC 700699).